We begin with the raw amino-acid sequence, 126 residues long: Urease subunit beta (126 aa).

The protein belongs to the urease beta subunit family. Heterotrimer of UreA (gamma), UreB (beta) and UreC (alpha) subunits. Three heterotrimers associate to form the active enzyme.

The protein localises to the cytoplasm. It catalyses the reaction urea + 2 H2O + H(+) = hydrogencarbonate + 2 NH4(+). It functions in the pathway nitrogen metabolism; urea degradation; CO(2) and NH(3) from urea (urease route): step 1/1. This chain is Urease subunit beta, found in Haloquadratum walsbyi (strain DSM 16790 / HBSQ001).